Here is a 319-residue protein sequence, read N- to C-terminus: Protein SICKLE (319 aa).

3 disordered regions span residues 1–59 (MEDS…TQRF), 71–239 (SFKK…PGAE), and 262–299 (CSDA…SNQQ). 2 stretches are compositionally biased toward polar residues: residues 27–56 (TTGT…SFET) and 78–88 (PKQQYISSPSH). Over residues 93–103 (PVPPQFPPSVP) the composition is skewed to pro residues. Positions 185-210 (SYNNTPPQFSNYGRQNANWGGNTYPN) are enriched in polar residues. The span at 228–238 (DGGRRPMEPGA) shows a compositional bias: basic and acidic residues. The span at 285–299 (SVTSEATHKTSSNQQ) shows a compositional bias: polar residues.

As to quaternary structure, interacts with ubiquitin thioesterases UBP12 and UBP13, and with protein phosphatase 2A subunits PP2AB1, PP2AB2, PP2A3, PP2A4, PP2AA1 and PP2AA2. Expressed in the shoot apical meristem (SAM), embryos, seedlings, root tips, and root and leaf primordia.

It is found in the nucleus. The protein resides in the cytoplasm. The protein localises to the cytosol. Its function is as follows. Involved in miRNAs and siRNAs biogenesis and thus promotes gene silencing. Modulates auxin (IAA) transport-related developmental programs by regulating protein phosphatase 2A (PP2As)-driven auxin efflux carrier PIN proteins recycling and polarity. Required during development. Necessary for abiotic stress (e.g. chilling and salt) tolerance. This chain is Protein SICKLE, found in Arabidopsis thaliana (Mouse-ear cress).